A 427-amino-acid polypeptide reads, in one-letter code: Glutamate-1-semialdehyde 2,1-aminomutase (427 aa).

Residue lysine 265 is modified to N6-(pyridoxal phosphate)lysine.

The protein belongs to the class-III pyridoxal-phosphate-dependent aminotransferase family. HemL subfamily. Homodimer. The cofactor is pyridoxal 5'-phosphate.

Its subcellular location is the cytoplasm. It carries out the reaction (S)-4-amino-5-oxopentanoate = 5-aminolevulinate. It functions in the pathway porphyrin-containing compound metabolism; protoporphyrin-IX biosynthesis; 5-aminolevulinate from L-glutamyl-tRNA(Glu): step 2/2. The protein is Glutamate-1-semialdehyde 2,1-aminomutase of Colwellia psychrerythraea (strain 34H / ATCC BAA-681) (Vibrio psychroerythus).